The primary structure comprises 584 residues: DNA ligase (584 aa).

Glu249 serves as a coordination point for ATP. Residue Lys251 is the N6-AMP-lysine intermediate of the active site. ATP is bound by residues Arg256, Arg271, Glu301, Phe341, Arg416, and Lys422.

This sequence belongs to the ATP-dependent DNA ligase family. It depends on Mg(2+) as a cofactor.

The catalysed reaction is ATP + (deoxyribonucleotide)n-3'-hydroxyl + 5'-phospho-(deoxyribonucleotide)m = (deoxyribonucleotide)n+m + AMP + diphosphate.. Functionally, DNA ligase that seals nicks in double-stranded DNA during DNA replication, DNA recombination and DNA repair. The protein is DNA ligase of Pyrobaculum neutrophilum (strain DSM 2338 / JCM 9278 / NBRC 100436 / V24Sta) (Thermoproteus neutrophilus).